Consider the following 239-residue polypeptide: Probable septum site-determining protein MinC (239 aa).

It belongs to the MinC family. In terms of assembly, interacts with MinD and FtsZ.

Its function is as follows. Cell division inhibitor that blocks the formation of polar Z ring septums. Rapidly oscillates between the poles of the cell to destabilize FtsZ filaments that have formed before they mature into polar Z rings. Prevents FtsZ polymerization. This chain is Probable septum site-determining protein MinC, found in Colwellia psychrerythraea (strain 34H / ATCC BAA-681) (Vibrio psychroerythus).